A 118-amino-acid chain; its full sequence is uncharacterized protein (118 aa).

It belongs to the HesB/IscA family. Ycf83 subfamily.

This is an uncharacterized protein from Synechocystis sp. (strain ATCC 27184 / PCC 6803 / Kazusa).